The following is a 349-amino-acid chain: MNVTSNATAAGSFPLAFGLKTSFGFMHYAKAPAINLRPKESLLPEMSDGVLALVAPVVAYWALSGIFHVIDTFHLAEKYRIHPSEEVAKRNKASRMHVFLEVILQHIIQTIVGLIFMHFEPIYMTGFEENAMWKLRADLPRIIPDAAIYYGYMYGMSALKIFAGFLFVDTWQYFLHRLMHMNKTLYKWFHSVHHELYVPYAYGALFNNPVEGFLLDTLGTGIAMTLTHLTHREQIILFTFATMKTVDDHCGYALPLDPFQWLFPNNAVYHDIHHQQFGIKTNFAQPFFTFWDNLFQTNFKGFEEYQKKQRRVTIDKYKEFLQERELEKKEKLKNFKAMNAAENEVKKEK.

5 helical membrane passes run 9–29, 50–70, 99–119, 148–168, and 209–229; these read AAGS…MHYA, VLAL…FHVI, FLEV…FMHF, IYYG…FLFV, and PVEG…LTHL. One can recognise a Fatty acid hydroxylase domain in the interval 162–297; that stretch reads FAGFLFVDTW…FTFWDNLFQT (136 aa).

It belongs to the sterol desaturase family.

It is found in the endoplasmic reticulum membrane. It catalyses the reaction sphinganine + 2 Fe(II)-[cytochrome b5] + O2 + 2 H(+) = (4R)-hydroxysphinganine + 2 Fe(III)-[cytochrome b5] + H2O. The enzyme catalyses an N-acylsphinganine + 2 Fe(II)-[cytochrome b5] + O2 + 2 H(+) = an N-acyl-(4R)-4-hydroxysphinganine + 2 Fe(III)-[cytochrome b5] + H2O. The catalysed reaction is an N-acyleicosasphinganine + 2 Fe(II)-[cytochrome b5] + O2 + 2 H(+) = N-acyl-4-hydroxyeicosasphinganine + 2 Fe(III)-[cytochrome b5] + H2O. Its pathway is membrane lipid metabolism; sphingolipid biosynthesis. Required for hydroxylation of C-4 in the sphingoid moiety of ceramide. Catalyzes the conversion of sphinganine to phytosphingosine in sphingolipid biosynthesis. Involved in the response to syringomycin. This Saccharomyces cerevisiae (strain ATCC 204508 / S288c) (Baker's yeast) protein is Sphingolipid C4-hydroxylase SUR2 (SUR2).